Here is a 1849-residue protein sequence, read N- to C-terminus: Breast cancer type 1 susceptibility protein homolog (1849 aa).

Residue methionine 1 is modified to N-acetylmethionine. The RING-type zinc-finger motif lies at 24–65 (CPICLELIKEPVSTKCDHIFCKFCMLKLLNQKKGPSQCPLCK). Serine 114 is subject to Phosphoserine. Residues lysine 301 and lysine 339 each participate in a glycyl lysine isopeptide (Lys-Gly) (interchain with G-Cter in SUMO2) cross-link. Serine 395, serine 398, serine 423, and serine 434 each carry phosphoserine. Glycyl lysine isopeptide (Lys-Gly) (interchain with G-Cter in SUMO2) cross-links involve residues lysine 457 and lysine 517. Basic and acidic residues predominate over residues 530-542 (KMTEGTDQTEQKC). Disordered regions lie at residues 530–558 (KMTE…KTKR) and 620–662 (ELEL…RQSQ). Residues serine 691, serine 711, and serine 720 each carry the phosphoserine modification. Residues 882 to 912 (SGSLRDQSPRDPLKCRQKEDSQGKSESKSQH) form a disordered region. Positions 888–910 (QSPRDPLKCRQKEDSQGKSESKS) are enriched in basic and acidic residues. A Glycyl lysine isopeptide (Lys-Gly) (interchain with G-Cter in SUMO2) cross-link involves residue lysine 981. Serine 982 carries the phosphoserine; by CHEK2 modification. Serine 1002 is modified (phosphoserine). Over residues 1036 to 1061 (NSVNEVGSSTNEVGSSVNEVGSSGEN) the composition is skewed to low complexity. The tract at residues 1036-1070 (NSVNEVGSSTNEVGSSVNEVGSSGENIQAEPGRNR) is disordered. Lysine 1073 is covalently cross-linked (Glycyl lysine isopeptide (Lys-Gly) (interchain with G-Cter in SUMO2)). Residues serine 1138, serine 1184, serine 1211, serine 1212, serine 1274, serine 1323, serine 1330, serine 1336, and serine 1382 each carry the phosphoserine modification. The disordered stretch occupies residues 1172-1211 (FSESVQKGEFRGSPGPFTHTHLAQGHQRGAGKLESEETVS). Disordered regions lie at residues 1321–1389 (YQSE…ILTT), 1412–1433 (VLER…DSRG), and 1452–1493 (SEKS…RSSA). Residues 1336 to 1360 (SDDEERETGLEEDSCQEEQSVDSDL) are compositionally biased toward acidic residues. 2 stretches are compositionally biased toward polar residues: residues 1370 to 1389 (ETSL…ILTT) and 1418 to 1429 (SQPSHSSASLTA). Residue threonine 1389 is modified to Phosphothreonine. Residues 1392–1419 (RDTMQDNLLKLQQEMAELEAVLERHGSQ) form an interaction with PALB2 region. Serine 1418, serine 1452, and serine 1518 each carry phosphoserine. 2 disordered regions span residues 1562-1590 (SLFS…PPSA) and 1621-1640 (REES…ERSK). Composition is skewed to basic and acidic residues over residues 1566–1582 (HEPE…EPAH) and 1621–1631 (REESMSKEKPE). 2 consecutive BRCT domains span residues 1642–1729 (RLSM…DFEV) and 1749–1848 (RDKK…TYLV).

In terms of assembly, heterodimer with BARD1. Part of the BRCA1-associated genome surveillance complex (BASC), which contains BRCA1, MSH2, MSH6, MLH1, ATM, BLM, PMS2 and the MRE11-RAD50-NBN protein (MRN) complex. This association could be a dynamic process changing throughout the cell cycle and within subnuclear domains. Component of the BRCA1-A complex, at least composed of BRCA1, BARD1, UIMC1/RAP80, ABRAXAS1, BRCC3/BRCC36, BABAM2 and BABAM1/NBA1. Interacts (via the BRCT domains) with ABRAXAS1 (phosphorylated form); this is important for recruitment to sites of DNA damage. Can form a heterotetramer with two molecules of ABRAXAS1 (phosphorylated form). Component of the BRCA1-RBBP8 complex. Interacts (via the BRCT domains) with RBBP8 ('Ser-327' phosphorylated form); the interaction ubiquitinates RBBP8, regulates CHEK1 activation, and involves RBBP8 in BRCA1-dependent G2/M checkpoint control on DNA damage. Associates with RNA polymerase II holoenzyme. Interacts with SMC1A, NELFB, DCLRE1C, CLSPN. CHEK1, CHEK2, BAP1, BRCC3, UBXN1 and PCLAF. Interacts (via BRCT domains) with BRIP1 (phosphorylated form). Interacts with FANCD2 (ubiquitinated form). Interacts with H2AX (phosphorylated on 'Ser-140'). Interacts (via the BRCT domains) with ACACA (phosphorylated form); the interaction prevents dephosphorylation of ACACA. Part of a BRCA complex containing BRCA1, BRCA2 and PALB2. Interacts directly with PALB2; the interaction is essential for its function in HRR. Interacts directly with BRCA2; the interaction occurs only in the presence of PALB2 which serves as the bridging protein. Interacts (via the BRCT domains) with LMO4; the interaction represses the transcriptional activity of BRCA1. Interacts (via the BRCT domains) with CCAR2 (via N-terminus); the interaction represses the transcriptional activator activity of BRCA1. Interacts with EXD2. Interacts (via C-terminus) with DHX9; this interaction is direct and links BRCA1 to the RNA polymerase II holoenzyme. Interacts with DNA helicase ZGRF1; the interaction is increased following DNA damage induction. Phosphorylated in response to IR, UV, and various stimuli that cause checkpoint activation, probably by ATM or ATR. Phosphorylation at Ser-982 by CHEK2 regulates mitotic spindle assembly. Phosphorylation by AURKA regulates centrosomal microtubule nucleation. In terms of processing, autoubiquitinated, undergoes 'Lys-6'-linked polyubiquitination. 'Lys-6'-linked polyubiquitination does not promote degradation.

The protein resides in the nucleus. It localises to the chromosome. Its subcellular location is the cytoplasm. The catalysed reaction is S-ubiquitinyl-[E2 ubiquitin-conjugating enzyme]-L-cysteine + [acceptor protein]-L-lysine = [E2 ubiquitin-conjugating enzyme]-L-cysteine + N(6)-ubiquitinyl-[acceptor protein]-L-lysine.. It functions in the pathway protein modification; protein ubiquitination. E3 ubiquitin-protein ligase that specifically mediates the formation of 'Lys-6'-linked polyubiquitin chains and plays a central role in DNA repair by facilitating cellular responses to DNA damage. It is unclear whether it also mediates the formation of other types of polyubiquitin chains. The BRCA1-BARD1 heterodimer coordinates a diverse range of cellular pathways such as DNA damage repair, ubiquitination and transcriptional regulation to maintain genomic stability. Regulates centrosomal microtubule nucleation. Required for appropriate cell cycle arrests after ionizing irradiation in both the S-phase and the G2 phase of the cell cycle. Required for FANCD2 targeting to sites of DNA damage. Inhibits lipid synthesis by binding to inactive phosphorylated ACACA and preventing its dephosphorylation. Contributes to homologous recombination repair (HRR) via its direct interaction with PALB2, fine-tunes recombinational repair partly through its modulatory role in the PALB2-dependent loading of BRCA2-RAD51 repair machinery at DNA breaks. Component of the BRCA1-RBBP8 complex which regulates CHEK1 activation and controls cell cycle G2/M checkpoints on DNA damage via BRCA1-mediated ubiquitination of RBBP8. Acts as a transcriptional activator. This chain is Breast cancer type 1 susceptibility protein homolog (BRCA1), found in Bos taurus (Bovine).